The sequence spans 93 residues: Parbolysin P5 (93 aa).

3 disulfides stabilise this stretch: Cys-16-Cys-37, Cys-22-Cys-33, and Cys-47-Cys-60.

It belongs to the worm cytolysin family. As to expression, localized within the skin and proboscis and are most readily isolated from body mucus secretions.

Its subcellular location is the secreted. Its function is as follows. Cytolysin that shows hemolytic activity (on bovine erythrocytes, HC(50)=5.75 mg/ml). This hemolytic activity is completely inhibited by small unilamelar vesicles composed of PC/PG, PC/PI and PC/PS in 1:1 molar ratios (with at least 100 mg/ml concentration). This chain is Parbolysin P5, found in Parborlasia corrugatus (Antarctic nemertean worm).